The following is a 316-amino-acid chain: UDP-N-acetylenolpyruvoylglucosamine reductase (316 aa).

An FAD-binding PCMH-type domain is found at 27–225; the sequence is VGGKAERFYR…KTAINALLKK (199 aa). The active site involves arginine 190. The Proton donor role is filled by serine 239. Residue glutamate 309 is part of the active site.

It belongs to the MurB family. FAD is required as a cofactor.

It localises to the cytoplasm. It catalyses the reaction UDP-N-acetyl-alpha-D-muramate + NADP(+) = UDP-N-acetyl-3-O-(1-carboxyvinyl)-alpha-D-glucosamine + NADPH + H(+). Its pathway is cell wall biogenesis; peptidoglycan biosynthesis. Functionally, cell wall formation. The chain is UDP-N-acetylenolpyruvoylglucosamine reductase from Coxiella burnetii (strain RSA 331 / Henzerling II).